The primary structure comprises 404 residues: Tryptophan synthase beta chain (404 aa).

K94 is modified (N6-(pyridoxal phosphate)lysine).

Belongs to the TrpB family. Tetramer of two alpha and two beta chains. Pyridoxal 5'-phosphate serves as cofactor.

It carries out the reaction (1S,2R)-1-C-(indol-3-yl)glycerol 3-phosphate + L-serine = D-glyceraldehyde 3-phosphate + L-tryptophan + H2O. Its pathway is amino-acid biosynthesis; L-tryptophan biosynthesis; L-tryptophan from chorismate: step 5/5. In terms of biological role, the beta subunit is responsible for the synthesis of L-tryptophan from indole and L-serine. This is Tryptophan synthase beta chain from Staphylococcus aureus (strain JH1).